Here is a 474-residue protein sequence, read N- to C-terminus: 3-isopropylmalate dehydratase large subunit (474 aa).

[4Fe-4S] cluster is bound by residues Cys-352, Cys-413, and Cys-416.

The protein belongs to the aconitase/IPM isomerase family. LeuC type 1 subfamily. Heterodimer of LeuC and LeuD. The cofactor is [4Fe-4S] cluster.

The catalysed reaction is (2R,3S)-3-isopropylmalate = (2S)-2-isopropylmalate. Its pathway is amino-acid biosynthesis; L-leucine biosynthesis; L-leucine from 3-methyl-2-oxobutanoate: step 2/4. Functionally, catalyzes the isomerization between 2-isopropylmalate and 3-isopropylmalate, via the formation of 2-isopropylmaleate. This Pseudomonas savastanoi pv. phaseolicola (strain 1448A / Race 6) (Pseudomonas syringae pv. phaseolicola (strain 1448A / Race 6)) protein is 3-isopropylmalate dehydratase large subunit.